Reading from the N-terminus, the 344-residue chain is Phosphate acyltransferase (344 aa).

The protein belongs to the PlsX family. In terms of assembly, homodimer. Probably interacts with PlsY.

It is found in the cytoplasm. It carries out the reaction a fatty acyl-[ACP] + phosphate = an acyl phosphate + holo-[ACP]. Its pathway is lipid metabolism; phospholipid metabolism. Catalyzes the reversible formation of acyl-phosphate (acyl-PO(4)) from acyl-[acyl-carrier-protein] (acyl-ACP). This enzyme utilizes acyl-ACP as fatty acyl donor, but not acyl-CoA. This is Phosphate acyltransferase from Yersinia enterocolitica serotype O:8 / biotype 1B (strain NCTC 13174 / 8081).